Reading from the N-terminus, the 262-residue chain is Probable aminoglycoside 3'-phosphotransferase (262 aa).

Asp-187 serves as the catalytic Proton acceptor.

Belongs to the aminoglycoside phosphotransferase family.

The catalysed reaction is kanamycin A + ATP = kanamycin 3'-phosphate + ADP + H(+). The polypeptide is Probable aminoglycoside 3'-phosphotransferase (ymdC) (Lactococcus lactis subsp. lactis (strain IL1403) (Streptococcus lactis)).